The sequence spans 739 residues: MEHTYQYAWVIPLLPLPVIMSMGFGLILIPTATKNLRRIWAFPSVLLLSIAMVFSVQLSIQQINGSSIYQYLWSWTVNNDFSLEFGYLIDPLTSIMLILITTVGILVLIYSDGYMSHDEGYLRFFVYISFFNTSMLGLVTSSNLIQIYFFWELVGMCSYLLIGFWFTRPIAASACQKAFVTNRVGDFGLLLGILGFFWITGSLEFRDLFKIANNWIPNNGVNSLLTTLCAFLLFLGAVAKSAQFPLHVWLPDAMEGPTPISALIQAATMVAAGIFLLARLLPLFISLPLIMSFISLVGTITLFLGATLALAQRDIKRSLAYSTMSQLGYMMLALGIGSYQAALFHLITHAYSKALLFLGSGSVIHSMEPLVGYSPDKSQNMVLMGGLRKYIPITRTTFLWGTLSLCGIPPLACFWSKDEILSNSWLYSPFFGIIASFTAGLTAFYMFRIYLLTFDGYLRVHFQNYSSTKESSLYSISLWGKRIPKGVNRDFVLSTTKSGVSFFSQNIPKIQGNTRNRIGSFTTSFGAKNTFAYPHETGNTMLFPLLILLLFTLFIGFIGISFDNGGIGNGIAELTILSKWLTPSINFTQESSNSFVNSYEFITNAISSVTLAIFGLFIAYIFYGSAYSFFQNLDLINSFYKGNPKKEFLDQVKKNIYSWSYNRGYIDIFYTRVFTLGIRGLTELTEFFDKGVIYGITNGVGLPSFCIGEEIKYVGGGRISSYLFFFLCYVSLFLFFFLS.

The next 16 membrane-spanning stretches (helical) occupy residues 9 to 29, 39 to 59, 89 to 109, 125 to 145, 147 to 167, 185 to 205, 219 to 239, 258 to 278, 280 to 300, 327 to 347, 354 to 374, 396 to 416, 425 to 445, 542 to 562, 610 to 630, and 719 to 739; these read WVIP…LILI, IWAF…VQLS, IDPL…LVLI, FVYI…SNLI, IYFF…FWFT, GDFG…SLEF, NGVN…GAVA, TPIS…FLLA, LLPL…VGTI, LGYM…FHLI, ALLF…VGYS, TTFL…CFWS, WLYS…TAFY, LFPL…GISF, TLAI…YSFF, and ISSY…FFLS.

The protein belongs to the complex I subunit 5 family. NDH is composed of at least 16 different subunits, 5 of which are encoded in the nucleus.

Its subcellular location is the plastid. The protein localises to the chloroplast thylakoid membrane. The enzyme catalyses a plastoquinone + NADH + (n+1) H(+)(in) = a plastoquinol + NAD(+) + n H(+)(out). It catalyses the reaction a plastoquinone + NADPH + (n+1) H(+)(in) = a plastoquinol + NADP(+) + n H(+)(out). Functionally, NDH shuttles electrons from NAD(P)H:plastoquinone, via FMN and iron-sulfur (Fe-S) centers, to quinones in the photosynthetic chain and possibly in a chloroplast respiratory chain. The immediate electron acceptor for the enzyme in this species is believed to be plastoquinone. Couples the redox reaction to proton translocation, and thus conserves the redox energy in a proton gradient. This is NAD(P)H-quinone oxidoreductase subunit 5, chloroplastic (ndhF) from Triticum aestivum (Wheat).